We begin with the raw amino-acid sequence, 1119 residues long: Transient receptor potential cation channel subfamily A member 1 (1119 aa).

Over 1 to 718 (MKRSLRKMWR…MKWLAYGFRA (718 aa)) the chain is Cytoplasmic. ANK repeat units follow at residues 62-92 (MDTF…EVLH), 97-126 (YGNT…NPNL), 130-160 (NMMA…DVNL), 164-193 (NGNT…KPCK), 197-226 (WGCF…EHGY), 238-267 (GKAT…QIDP), 271-301 (GRCT…SVDI), 308-337 (CHET…DINK), 341-370 (EGRS…QVDI), 374-403 (FGRN…QQIK), 412-441 (DGCT…SIHS), 445-474 (DKKS…DTRL), 481-510 (HGMT…LFLS), 513-542 (NGWT…KCTD), 547-576 (DGNT…DIVL), and 579-609 (QQAS…DECL). Cystine bridges form between cysteine 192–cysteine 665, cysteine 462–cysteine 665, cysteine 608–cysteine 621, cysteine 621–cysteine 665, and cysteine 633–cysteine 856. A 4-hydroxyproline; by EGLN1; transient; in normoxia and hyperoxia modification is found at proline 394. Residues cysteine 414 and cysteine 421 each contribute to the (E)-cinnamaldehyde site. Residue cysteine 621 participates in (E)-cinnamaldehyde binding. Cysteine 633 carries the post-translational modification Cysteine sulfenic acid (-SOH); transient; in hyperoxia. Positions 641, 665, and 710 each coordinate (E)-cinnamaldehyde. A helical membrane pass occupies residues 719–739 (HMMNLGSYCLGLIPMTILVVN). Residues 740-767 (IKPGMAFNSTGIINETSDHSEILDTTNS) are Extracellular-facing. Asparagine 747 and asparagine 753 each carry an N-linked (GlcNAc...) asparagine glycan. The chain crosses the membrane as a helical span at residues 768–793 (YLIKTCMILVFLSSIFGYCKEAGQIF). Residues glutamate 788 and glutamine 791 each contribute to the Ca(2+) site. Residues 794 to 798 (QQKRN) lie on the Cytoplasmic side of the membrane. A helical transmembrane segment spans residues 799–823 (YFMDISNVLEWIIYTTGIIFVLPLF). Positions 805 and 808 each coordinate Ca(2+). The Extracellular portion of the chain corresponds to 824–829 (VEIPAH). The chain crosses the membrane as a helical span at residues 830–850 (LQWQCGAIAVYFYWMNFLLYL). At 851-862 (QRFENCGIFIVM) the chain is on the cytoplasmic side. Residue cysteine 856 is modified to Cysteine sulfenic acid (-SOH); transient; in hyperoxia. Residues 863–892 (LEVILKTLLRSTVVFIFLLLAFGLSFYILL) traverse the membrane as a helical segment. Topologically, residues 893-901 (NLQDPFSSP) are extracellular. The pore-forming intramembrane region spans 902–922 (LLSIIQTFSMMLGDINYRESF). Residues 923-933 (LEPYLRNELAH) are Extracellular-facing. A helical transmembrane segment spans residues 934–960 (PVLSFAQLVSFTIFVPIVLMNLLIGLA). The Cytoplasmic segment spans residues 961–1119 (VGDIAEVQKH…VKAKTHHLEP (159 aa)). The stretch at 1042–1071 (MEILKQKYRLKDLTFLLEKQHELIKLIIQK) forms a coiled coil. 1046–1052 (KQKYRLK) serves as a coordination point for a 1,2-diacyl-sn-glycero-3-phospho-(1D-myo-inositol).

Belongs to the transient receptor (TC 1.A.4) family. As to quaternary structure, homotetramer. Interacts with TMEM100. Interacts with EGLN1. Interacts with the scorpion wasabi receptor toxin at the same site that electrophiles but in a non-covalent manner. Post-translationally, TRPA1 activation by electrophiles occurs though covalent modification of specific cysteine residues in the N-terminal cytoplasmic domain. In terms of processing, hydroxylation is required for TRPA1 activity inhibition in normoxia. In hypoxia, the decrease in oxygen concentration diminishes the activity of the hydroxylase EGLN1, thus relieving TRPA1 from inhibition and ultimately leading to channel activation. Oxidation of Cys-633 and Cys-856 in hyperoxia may override the hydroxylase EGLN1-mediated inhibition, causing TRPA1 activation.

Its subcellular location is the cell membrane. It catalyses the reaction Ca(2+)(in) = Ca(2+)(out). The enzyme catalyses Mg(2+)(in) = Mg(2+)(out). The catalysed reaction is Na(+)(in) = Na(+)(out). It carries out the reaction K(+)(in) = K(+)(out). It catalyses the reaction Zn(2+)(in) = Zn(2+)(out). Its activity is regulated as follows. Electrophilic ligands activate the channel by covalent modification of intracellular cysteines; Cys-621 plays a key role in covalent binding of electrophiles. Extracellular Ca(2+) both potentiates and inactivates TRPA1; a rapid potentiation follows by slow desensitization. Activated by increase in intracellular Ca(2+) concentration. Inhibited by the potent blocker of TRPV channels ruthenium red, A-967079, AP-18, HC-030031, and aryl sulfonamide derivative (S)-N-(4-chlorobenzyl)-1-((4-fluorophenyl)sulfonyl)pyrrolidine-2-carboxamide (ASD). Activated by benzyl isothiocyanate (BITC), iodoacetamide, sulfhydryl reactive agent MTSEA, N-methyl maleimide (NMM), N-ethylmaleimide (NEM), and 2-aminoethyldiphenylborinate (2-APB). Also activated by hyperoxia. Acivated by intracellular Zn(2+). TRPA1 activation may critically depend on the presence of small intracellular compounds such as polyphosphates. Ligand-activated Ca(2+)-permeable, nonselective cation channel involved in pain detection and possibly also in cold perception, oxygen concentration perception, cough, itch, and inner ear function. Has a relatively high Ca(2+) selectivity, with a preference for divalent over monovalent cations (Ca(2+) &gt; Ba(2+) &gt; Mg(2+) &gt; NH4(+) &gt; Li(+) &gt; K(+)), the influx of cation into the cytoplasm leads to membrane depolarization. Has a central role in the pain response to endogenous inflammatory mediators, such as bradykinin and to a diverse array of irritants. Activated by a large variety of structurally unrelated electrophilic and non-electrophilic chemical compounds, such as allylthiocyanate (AITC) from mustard oil or wasabi, cinnamaldehyde, diallyl disulfide (DADS) from garlic, and acrolein, an environmental irritant. Electrophilic ligands activate TRPA1 by interacting with critical N-terminal Cys residues in a covalent manner. Non-electrophile agonists bind at distinct sites in the transmembrane domain to promote channel activation. Also acts as an ionotropic cannabinoid receptor by being activated by delta(9)-tetrahydrocannabinol (THC), the psychoactive component of marijuana. May be a component for the mechanosensitive transduction channel of hair cells in inner ear, thereby participating in the perception of sounds. The chain is Transient receptor potential cation channel subfamily A member 1 from Homo sapiens (Human).